We begin with the raw amino-acid sequence, 256 residues long: 4-hydroxy-tetrahydrodipicolinate reductase (256 aa).

NAD(+)-binding positions include 12 to 17, D39, 86 to 88, and 110 to 113; these read GINGRV, GTT, and AANY. Catalysis depends on H144, which acts as the Proton donor/acceptor. Position 145 (H145) interacts with (S)-2,3,4,5-tetrahydrodipicolinate. Catalysis depends on K148, which acts as the Proton donor. (S)-2,3,4,5-tetrahydrodipicolinate is bound at residue 154–155; the sequence is GT.

It belongs to the DapB family.

It localises to the cytoplasm. The enzyme catalyses (S)-2,3,4,5-tetrahydrodipicolinate + NAD(+) + H2O = (2S,4S)-4-hydroxy-2,3,4,5-tetrahydrodipicolinate + NADH + H(+). It carries out the reaction (S)-2,3,4,5-tetrahydrodipicolinate + NADP(+) + H2O = (2S,4S)-4-hydroxy-2,3,4,5-tetrahydrodipicolinate + NADPH + H(+). It participates in amino-acid biosynthesis; L-lysine biosynthesis via DAP pathway; (S)-tetrahydrodipicolinate from L-aspartate: step 4/4. Its function is as follows. Catalyzes the conversion of 4-hydroxy-tetrahydrodipicolinate (HTPA) to tetrahydrodipicolinate. The polypeptide is 4-hydroxy-tetrahydrodipicolinate reductase (Gluconacetobacter diazotrophicus (strain ATCC 49037 / DSM 5601 / CCUG 37298 / CIP 103539 / LMG 7603 / PAl5)).